The sequence spans 321 residues: Endochitinase 1 (321 aa).

Residues 1 to 21 (MSFRALSVFSLFLSYLILGSA) form the signal peptide. A Chitin-binding type-1 domain is found at 22–64 (EQCGRQAGGALCPGGLCCSQFGWCGNTDDYCKKENGCQSQCSG). 7 disulfides stabilise this stretch: cysteine 24-cysteine 39, cysteine 33-cysteine 45, cysteine 38-cysteine 52, cysteine 58-cysteine 62, cysteine 93-cysteine 156, cysteine 167-cysteine 175, and cysteine 274-cysteine 306. The tract at residues 65 to 98 (SGGDTGGLDSLITRERFDQMLLHRNDGGCPARGF) is hinge. Residues 99-321 (YTYDAFIAAA…YNNGPSVDSM (223 aa)) form a catalytic region. Residue glutamate 137 is the Proton donor of the active site.

The protein belongs to the glycosyl hydrolase 19 family. Chitinase class I subfamily.

It is found in the vacuole. The enzyme catalyses Random endo-hydrolysis of N-acetyl-beta-D-glucosaminide (1-&gt;4)-beta-linkages in chitin and chitodextrins.. Defense against chitin-containing fungal pathogens. The chain is Endochitinase 1 (CHIA1) from Theobroma cacao (Cacao).